A 198-amino-acid polypeptide reads, in one-letter code: MIIMKEAIIATHNPGKVKEFKEILEPRGYDVKSLAEIGFTEEIEETGHTFEENAIMKAEAVAKAVNKMVIADDSGLSIDNLGGRPGVYSARYAGEQKDDQANIEKVLSELKGIEKEQRTARFRCALAVSIPGEETKTVEGHVEGYIAEEPRGEYGFGYDPIFIVKDKDKTMAELTSDEKNKISHRADALKKLSKLLEA.

Residue Thr11–Lys16 coordinates substrate. Mg(2+) contacts are provided by Glu44 and Asp73. Asp73 functions as the Proton acceptor in the catalytic mechanism. Substrate contacts are provided by residues Ser74, Phe156–Asp159, Lys179, and His184–Arg185.

It belongs to the HAM1 NTPase family. In terms of assembly, homodimer. Mg(2+) is required as a cofactor.

The catalysed reaction is XTP + H2O = XMP + diphosphate + H(+). The enzyme catalyses dITP + H2O = dIMP + diphosphate + H(+). It carries out the reaction ITP + H2O = IMP + diphosphate + H(+). Its function is as follows. Pyrophosphatase that catalyzes the hydrolysis of nucleoside triphosphates to their monophosphate derivatives, with a high preference for the non-canonical purine nucleotides XTP (xanthosine triphosphate), dITP (deoxyinosine triphosphate) and ITP. Seems to function as a house-cleaning enzyme that removes non-canonical purine nucleotides from the nucleotide pool, thus preventing their incorporation into DNA/RNA and avoiding chromosomal lesions. This Bacillus subtilis (strain 168) protein is dITP/XTP pyrophosphatase (ysnA).